The chain runs to 160 residues: Large ribosomal subunit protein uL22c (160 aa).

This sequence belongs to the universal ribosomal protein uL22 family. In terms of assembly, part of the 50S ribosomal subunit.

It is found in the plastid. Its subcellular location is the chloroplast. Its function is as follows. This protein binds specifically to 23S rRNA. The globular domain of the protein is located near the polypeptide exit tunnel on the outside of the subunit, while an extended beta-hairpin is found that lines the wall of the exit tunnel in the center of the 70S ribosome. The sequence is that of Large ribosomal subunit protein uL22c (rpl22) from Nasturtium officinale (Watercress).